The following is a 715-amino-acid chain: Fatty acid oxidation complex subunit alpha (715 aa).

The tract at residues methionine 1–alanine 190 is enoyl-CoA hydratase/isomerase. Aspartate 297 serves as a coordination point for substrate. Residues histidine 312–asparagine 715 form a 3-hydroxyacyl-CoA dehydrogenase region. NAD(+) contacts are provided by residues methionine 325, aspartate 344, valine 401–glutamate 403, lysine 408, and serine 430. The active-site For 3-hydroxyacyl-CoA dehydrogenase activity is the histidine 451. An NAD(+)-binding site is contributed by asparagine 454. Residues asparagine 501 and tyrosine 660 each coordinate substrate.

In the N-terminal section; belongs to the enoyl-CoA hydratase/isomerase family. The protein in the C-terminal section; belongs to the 3-hydroxyacyl-CoA dehydrogenase family. Heterotetramer of two alpha chains (FadB) and two beta chains (FadA).

It catalyses the reaction a (3S)-3-hydroxyacyl-CoA + NAD(+) = a 3-oxoacyl-CoA + NADH + H(+). It carries out the reaction a (3S)-3-hydroxyacyl-CoA = a (2E)-enoyl-CoA + H2O. The catalysed reaction is a 4-saturated-(3S)-3-hydroxyacyl-CoA = a (3E)-enoyl-CoA + H2O. The enzyme catalyses (3S)-3-hydroxybutanoyl-CoA = (3R)-3-hydroxybutanoyl-CoA. It catalyses the reaction a (3Z)-enoyl-CoA = a 4-saturated (2E)-enoyl-CoA. It carries out the reaction a (3E)-enoyl-CoA = a 4-saturated (2E)-enoyl-CoA. It functions in the pathway lipid metabolism; fatty acid beta-oxidation. Its function is as follows. Involved in the aerobic and anaerobic degradation of long-chain fatty acids via beta-oxidation cycle. Catalyzes the formation of 3-oxoacyl-CoA from enoyl-CoA via L-3-hydroxyacyl-CoA. It can also use D-3-hydroxyacyl-CoA and cis-3-enoyl-CoA as substrate. The chain is Fatty acid oxidation complex subunit alpha from Pseudomonas putida (Arthrobacter siderocapsulatus).